We begin with the raw amino-acid sequence, 307 residues long: Cyclooctat-9-en-7-ol synthase (307 aa).

Residues aspartate 110, asparagine 220, serine 224, and glutamate 228 each contribute to the Mg(2+) site. The short motif at aspartate 110–aspartate 113 is the DDXXD motif; degenerate element. Positions asparagine 220–glutamate 228 match the NSE/DTE motif motif.

Belongs to the terpene synthase family. In terms of assembly, homodimer. Requires Mg(2+) as cofactor.

The catalysed reaction is geranylgeranyl diphosphate + H2O = cyclooctat-9-en-7-ol + diphosphate. Its function is as follows. Catalyzes the cyclization of the linear isoprenoid intermediate geranylgeranyl diphosphate to tricycclic cyclooctat-9-en-7-ol in the cyclooctatin biosynthesis pathway. Cyclooctatin is a potent inhibitor of lysophospholipase. In Streptomyces melanosporofaciens, this protein is Cyclooctat-9-en-7-ol synthase.